Reading from the N-terminus, the 37-residue chain is Cytochrome b6-f complex subunit 5 (37 aa).

A helical transmembrane segment spans residues 5–25 (FLFGIVLGLIPVTLAGLFVTA).

Belongs to the PetG family. As to quaternary structure, the 4 large subunits of the cytochrome b6-f complex are cytochrome b6, subunit IV (17 kDa polypeptide, PetD), cytochrome f and the Rieske protein, while the 4 small subunits are PetG, PetL, PetM and PetN. The complex functions as a dimer.

Its subcellular location is the plastid. It localises to the chloroplast thylakoid membrane. In terms of biological role, component of the cytochrome b6-f complex, which mediates electron transfer between photosystem II (PSII) and photosystem I (PSI), cyclic electron flow around PSI, and state transitions. PetG is required for either the stability or assembly of the cytochrome b6-f complex. This Daucus carota (Wild carrot) protein is Cytochrome b6-f complex subunit 5.